The sequence spans 442 residues: Septin-8 (442 aa).

Residues 1 to 16 are compositionally biased toward basic and acidic residues; the sequence is MAATDLERVSSAEPEP. The disordered stretch occupies residues 1 to 23; the sequence is MAATDLERVSSAEPEPRSLSLGG. An N-acetylalanine modification is found at A2. Position 10 is a phosphoserine (S10). Residues 41 to 307 form the Septin-type G domain; that stretch reads QGFSFNILCV…ELYRRCKLEE (267 aa). The G1 motif stretch occupies residues 51–58; that stretch reads GETGIGKS. Residues 51 to 58, G106, 187 to 195, G241, and R256 each bind GTP; these read GETGIGKS and KADTISKSE. Residues 103-106 form a G3 motif region; it reads DAVG. The G4 motif stretch occupies residues 186 to 189; sequence AKAD. Residues 322 to 410 adopt a coiled-coil conformation; it reads LQETYEAKRK…RKAAVEALQS (89 aa). The span at 377 to 391 shows a compositional bias: basic and acidic residues; sequence HQEEKRKVEEKRREL. The disordered stretch occupies residues 377–442; sequence HQEEKRKVEE…WSSIYSVTIP (66 aa). Composition is skewed to polar residues over residues 408–420 and 432–442; these read LQSQALHATSQQP and GWSSIYSVTIP.

It belongs to the TRAFAC class TrmE-Era-EngA-EngB-Septin-like GTPase superfamily. Septin GTPase family. Septins polymerize into heterooligomeric protein complexes that form filaments, and can associate with cellular membranes, actin filaments and microtubules. GTPase activity is required for filament formation. Interacts with CDK14, SEPTIN4, SEPTIN5 and SEPTIN7. Interacts with VAMP2; the interaction inhibits interaction of VAMP2 with SYP. Interacts with STX1A.

It localises to the cytoplasm. The protein resides in the cytoskeleton. The protein localises to the synapse. It is found in the cell projection. Its subcellular location is the axon. It localises to the cytoplasmic vesicle. The protein resides in the secretory vesicle. The protein localises to the synaptic vesicle membrane. It is found in the presynapse. Filament-forming cytoskeletal GTPase. May play a role in platelet secretion. Seems to participate in the process of SNARE complex formation in synaptic vesicles. The protein is Septin-8 of Otolemur garnettii (Small-eared galago).